Here is a 1626-residue protein sequence, read N- to C-terminus: Collagen alpha-1(XXII) chain (1626 aa).

Positions 1–27 (MAGLRGNAVAGLLWMLLLWSGGGGCQA) are cleaved as a signal peptide. In terms of domain architecture, VWFA spans 38 to 213 (DLVFLLDTSS…NAIDKIRGKL (176 aa)). Residues 239 to 427 (GTKEITGFDL…LQRIVIYCDS (189 aa)) enclose the Laminin G-like domain. Asn-375 is a glycosylation site (N-linked (GlcNAc...) asparagine). Collagen-like domains lie at 481-520 (GEKGEMGVAGPMGLPGPKGDIGAIGPVGAPGPKGEKGDVG), 526-565 (QGEKGEKGSLGLPGPPGRDGSKGMRGEPGELGEPGLPGEV), 566-625 (GMRG…PGPS), 657-708 (GEQG…GIPG), 714-773 (GPPG…PGER), 774-833 (GEDG…PGLK), 868-922 (GPKG…GAPG), 925-984 (GAPG…PGKG), 1047-1095 (AGPP…PGKP), 1118-1155 (PPGPPGLPGLPGFKGDKGVPGKPGREGTEGKKGEAGPP), 1156-1215 (GLPG…AGPP), 1249-1308 (GKPG…PGKD), 1315-1374 (GPQG…PGEK), 1387-1446 (GEPG…PGPP), 1495-1550 (SQGR…PGAP), and 1575-1604 (DGLPGIPGPQGETGPAGHPGLPGPPGPPGQ). Disordered regions lie at residues 506-1002 (PVGA…GPLG), 1019-1103 (GGQC…LLSP), 1119-1458 (PGPP…RGES), and 1491-1609 (YMKS…DPSQ). Over residues 544 to 553 (DGSKGMRGEP) the composition is skewed to basic and acidic residues. Positions 571–580 (QGPPGLPGPP) are enriched in pro residues. Over residues 591 to 606 (ERGEKGTRGEKGERGL) the composition is skewed to basic and acidic residues. Residues 661 to 670 (APGPRGHQGA) are compositionally biased toward low complexity. 2 stretches are compositionally biased toward pro residues: residues 715 to 728 (PPGPPGVPGPPGPG) and 742 to 751 (KPGPPGPTGP). Basic and acidic residues-rich tracts occupy residues 769-778 (EPGERGEDGL) and 815-826 (RGEKGDQGEKGE). The span at 908–939 (AHGAPGAAGNPGAPGHVGAPGPSGPPGSVGAP) shows a compositional bias: low complexity. A compositionally biased stretch (basic and acidic residues) spans 945-957 (PGKDGERGEKGAA). Composition is skewed to low complexity over residues 959–974 (EEGSPGPVGPRGDPGA) and 1056–1065 (PGDKGSPGSR). 2 stretches are compositionally biased toward basic and acidic residues: residues 1131-1151 (KGDKGVPGKPGREGTEGKKGE) and 1173-1185 (RGADGEVGQKGDQ). The segment covering 1205–1223 (ADGIAGAAGPPGIQGSPGK) has biased composition (low complexity). The span at 1241 to 1250 (EEGKEGRDGK) shows a compositional bias: basic and acidic residues. Positions 1260–1275 (AGEPGLPGPEGARGPP) are enriched in low complexity. The segment covering 1379–1389 (KEGVPGKPGEP) has biased composition (low complexity). A compositionally biased stretch (basic and acidic residues) spans 1391–1404 (FKGERGDPGIKGDK). A compositionally biased stretch (gly residues) spans 1405–1414 (GPPGGKGQPG). The span at 1440-1449 (VGPPGPPGQP) shows a compositional bias: pro residues. Residues 1521 to 1530 (GRPGQGGLEG) are compositionally biased toward gly residues. Residues 1595-1604 (LPGPPGPPGQ) are compositionally biased toward pro residues.

This sequence belongs to the fibril-associated collagens with interrupted helices (FACIT) family. As to expression, restrictive expression is observed at tissue junctions such as the myotendinous junction in skeletal and heart muscle, the articular cartilage-synovial fluid junction, or the border between the anagen hair follicle and the dermis in the skin. It is deposited in the basement membrane zone of the myotendinous junction and the hair follicle and associated with the extrafibrillar matrix in cartilage.

The protein localises to the secreted. The protein resides in the extracellular space. It is found in the extracellular matrix. Its subcellular location is the cytoplasm. In terms of biological role, acts as a cell adhesion ligand for skin epithelial cells and fibroblasts. The protein is Collagen alpha-1(XXII) chain (COL22A1) of Homo sapiens (Human).